The sequence spans 274 residues: Large ribosomal subunit protein uL2 (274 aa).

Disordered stretches follow at residues Lys28 to His53 and Arg221 to Lys274. The segment covering Lys39–Arg48 has biased composition (low complexity). Over residues Lys253–Lys274 the composition is skewed to basic residues.

This sequence belongs to the universal ribosomal protein uL2 family. Part of the 50S ribosomal subunit. Forms a bridge to the 30S subunit in the 70S ribosome.

Its function is as follows. One of the primary rRNA binding proteins. Required for association of the 30S and 50S subunits to form the 70S ribosome, for tRNA binding and peptide bond formation. It has been suggested to have peptidyltransferase activity; this is somewhat controversial. Makes several contacts with the 16S rRNA in the 70S ribosome. The protein is Large ribosomal subunit protein uL2 of Proteus mirabilis (strain HI4320).